The sequence spans 316 residues: PDZ and LIM domain protein 3 (316 aa).

The PDZ domain maps to 1 to 84; the sequence is MPQNVVLPGP…QLCLKIDRAE (84 aa). Ser-18 and Ser-93 each carry phosphoserine. Arg-164 is subject to Omega-N-methylarginine. Positions 244–303 constitute an LIM zinc-binding domain; sequence PLCDKCGSGIVGAVVKARDKYRHPECFVCADCNLNLKQKGYFFVEGELYCETHARARTRP.

In terms of assembly, interacts with ACTN2. Forms a heterodimer with PDLIM4 (via LIM domain).

The protein resides in the cytoplasm. Its subcellular location is the myofibril. It localises to the sarcomere. The protein localises to the z line. Functionally, may play a role in the organization of actin filament arrays within muscle cells. This Mus musculus (Mouse) protein is PDZ and LIM domain protein 3 (Pdlim3).